Here is a 121-residue protein sequence, read N- to C-terminus: UPF0102 protein BF0706 (121 aa).

This sequence belongs to the UPF0102 family.

In Bacteroides fragilis (strain YCH46), this protein is UPF0102 protein BF0706.